A 98-amino-acid chain; its full sequence is DNA-binding protein Fis (98 aa).

The H-T-H motif DNA-binding region spans 74–93 (QTRAATMMGINRGTLRKKLK).

It belongs to the transcriptional regulatory Fis family. Homodimer.

Functionally, activates ribosomal RNA transcription. Plays a direct role in upstream activation of rRNA promoters. The sequence is that of DNA-binding protein Fis from Photobacterium profundum (strain SS9).